The sequence spans 156 residues: Envelope glycoprotein L (156 aa).

Positions 1–16 (MSPLVAVLVFFSAALG) are cleaved as a signal peptide. Positions 21–141 (GVAGNPHGLD…KELGEVAVHK (121 aa)) are interaction with gH. Positions 50–156 (ELEWDDEDHP…LRYNGGPPAE (107 aa)) constitute a gL alphaherpesvirus-type domain. Cysteine 71 and cysteine 95 are joined by a disulfide.

It belongs to the herpesviridae glycoprotein L (gL) family. Alphaherpesvirinae gL subfamily. In terms of assembly, interacts with glycoprotein H (gH); this interaction is necessary for the correct processing and cell surface expression of gH. The heterodimer gH/gL seems to interact with gB trimers during fusion. In terms of processing, O-glycosylated, and sialylated.

The protein resides in the virion membrane. The protein localises to the host cell membrane. It localises to the host Golgi apparatus. Its subcellular location is the host trans-Golgi network. In terms of biological role, the heterodimer glycoprotein H-glycoprotein L is required for the fusion of viral and plasma membranes leading to virus entry into the host cell. Acts as a functional inhibitor of gH and maintains gH in an inhibited form. Upon binding to host integrins, gL dissociates from gH leading to activation of the viral fusion glycoproteins gB and gH. The protein is Envelope glycoprotein L of Sus scrofa (Pig).